Consider the following 342-residue polypeptide: Cytosolic Fe-S cluster assembly factor NBP35 (342 aa).

The interval 16-42 is disordered; that stretch reads SKAAPKLVAPEPEHCPGPESEQAGKGD. Residues Cys30, Cys44, Cys47, and Cys53 each contribute to the [4Fe-4S] cluster site. Residue 83–90 participates in ATP binding; the sequence is GKGGVGKS. [4Fe-4S] cluster is bound by residues Cys256 and Cys259.

This sequence belongs to the Mrp/NBP35 ATP-binding proteins family. NUBP1/NBP35 subfamily. Heterotetramer of 2 NBP35 and 2 CFD1 chains. It depends on [4Fe-4S] cluster as a cofactor.

The protein localises to the cytoplasm. Component of the cytosolic iron-sulfur (Fe/S) protein assembly (CIA) machinery. Required for maturation of extramitochondrial Fe-S proteins. The NBP35-CFD1 heterotetramer forms a Fe-S scaffold complex, mediating the de novo assembly of an Fe-S cluster and its transfer to target apoproteins. The chain is Cytosolic Fe-S cluster assembly factor NBP35 from Coccidioides immitis (strain RS) (Valley fever fungus).